A 299-amino-acid polypeptide reads, in one-letter code: MDLNNKIFNILLPIVTVSFLLVFMPFSIFFKLLQFIRGCKESEKVNGKVVIITGSSSGIGEHLAYEYARRGAYLTLVARREDRLQVVADRCRKLGSPDVAVVRGDVSVIKDCKRFVQETISRFGRLDHLVNNAGIAEAKFFEDYSEISDVLPIVNTNFWGPVYATHFAIPHLKKTKGKIIAVASPAGWSGVPRMSIYAASKAAMINFYETLRIELHPEVGVTIVFPGLIENGNTNPDLLAEKQDWSQVVTIESAAECAKAVVNGICRGKTFVAEPSWVRVLFWLSAICPELLISKPKRN.

Residues 10 to 30 form a helical; Signal-anchor for type II membrane protein membrane-spanning segment; that stretch reads ILLPIVTVSFLLVFMPFSIFF. Residues 54–80 and D105 contribute to the NADP(+) site; that span reads GSSSGIGEHLAYEYARRGAYLTLVARR. S184 provides a ligand contact to substrate. Y197 acts as the Proton acceptor in catalysis. NADP(+) is bound by residues 197–201 and K201; that span reads YAASK.

Belongs to the short-chain dehydrogenases/reductases (SDR) family.

It localises to the membrane. In Arabidopsis thaliana (Mouse-ear cress), this protein is 11-beta-hydroxysteroid dehydrogenase-like 4A (HSD4).